The chain runs to 125 residues: Small ribosomal subunit protein mS41 (125 aa).

Residues Met1–Ala10 constitute a mitochondrion transit peptide. A disordered region spans residues Ser103–Lys125.

This sequence belongs to the mitochondrion-specific ribosomal protein mS41 family.

Its subcellular location is the mitochondrion. In terms of biological role, involved in telomere length regulation. The protein is Small ribosomal subunit protein mS41 (FYV4) of Candida glabrata (strain ATCC 2001 / BCRC 20586 / JCM 3761 / NBRC 0622 / NRRL Y-65 / CBS 138) (Yeast).